The chain runs to 958 residues: Transportin MOS14 (958 aa).

In terms of domain architecture, Importin N-terminal spans 26–93; it reads ADRWLQNFQG…RQSLTTLLKK (68 aa).

It belongs to the importin beta family. As to quaternary structure, interacts with RS2Z33, RSZ21, RS31A, SR34 and RAN1.

It is found in the nucleus. Functionally, functions as a nuclear import receptor for serine-arginine rich (SR) proteins. Regulates nuclear import of SR proteins that are required for proper splicing of the two resistance (R) genes SNC1 and RPS4, a crucial step for their functions in plant immunity. The polypeptide is Transportin MOS14 (Arabidopsis thaliana (Mouse-ear cress)).